We begin with the raw amino-acid sequence, 1285 residues long: Period circadian protein homolog 1 (1285 aa).

Residues 1-134 (MSGPLEGADG…SSEQSARART (134 aa)) form a disordered region. The segment at 1-151 (MSGPLEGADG…LRELKLRLPP (151 aa)) is interaction with BTRC. Composition is skewed to low complexity over residues 48-57 (NSNGSSGNES) and 64-115 (GASQ…ASSE). The span at 116–132 (QDNPSTSGCSSEQSARA) shows a compositional bias: polar residues. Phosphothreonine; by CSNK1E is present on Thr121. 2 positions are modified to phosphoserine; by CSNK1E: Ser122 and Ser126. The Nuclear export signal 1 motif lies at 138-147 (LMTALRELKL). PAS domains lie at 208–275 (ITSE…PFRL) and 348–414 (YEAP…KILQ). One can recognise a PAC domain in the interval 422–465 (HSPIRFCARNGEYVTMDTSWAGFVHPWSRKVAFVLGRHKVRTAP). Positions 489-498 (LSEQIHRLLL) match the Nuclear export signal 2 motif. Disordered regions lie at residues 503–544 (SSSP…PAPV) and 643–694 (TKRK…KEPV). Composition is skewed to low complexity over residues 523 to 533 (SPGSSSDSNGG) and 648 to 658 (ASSSSCTASSA). The tract at residues 592 to 811 (ELEVVPMPNQ…GLDSSSATPS (220 aa)) is required for phosphorylation by CSNK1E. 4 positions are modified to phosphoserine: Ser657, Ser659, Ser700, and Ser811. Disordered regions lie at residues 802–867 (GLDS…PPST) and 931–1030 (LSQA…DALS). A Nuclear localization signal motif is present at residues 820–836 (VPPGRRHHCRSKAKRSR). A compositionally biased stretch (basic residues) spans 823-840 (GRRHHCRSKAKRSRHHHT). Pro residues predominate over residues 853–867 (SPVPPSGPWPPPPST). The span at 943–954 (ASHSPSPSLTPL) shows a compositional bias: low complexity. A compositionally biased stretch (polar residues) spans 967–979 (FNSRCSSPLQLNL). Phosphoserine occurs at positions 972 and 973. The Nuclear export signal 3 motif lies at 975–982 (LQLNLLQL). An LXXLL motif is present at residues 1036-1040 (LELLL). Residues 1045–1055 (RSGTGSAASGS) are compositionally biased toward low complexity. Disordered regions lie at residues 1045-1091 (RSGT…SKYF) and 1202-1285 (IQDP…NSTS). The span at 1056-1070 (LGSGLGSGSGSGSHE) shows a compositional bias: gly residues. The segment covering 1071 to 1088 (GGSTSASITRSSQSSHTS) has biased composition (low complexity). A CRY binding domain region spans residues 1142–1285 (SRDRASVLKQ…ALPAEENSTS (144 aa)). Residues 1229 to 1241 (GEGGGGGGGGGEG) are compositionally biased toward gly residues. Residues 1269–1285 (GGSSSSPALPAEENSTS) are compositionally biased toward polar residues.

In terms of assembly, homodimer. Component of the circadian core oscillator, which includes the CRY proteins, CLOCK or NPAS2, BMAL1 or BMAL2, CSNK1D and/or CSNK1E, TIMELESS, and the PER proteins. Interacts directly with TIMELESS, PER2, PER3, CRY1 and CRY2. Interacts with BMAL1 and CLOCK. Interacts with GPRASP1. Interacts (phosphorylated) with BTRC and FBXW11; the interactions trigger proteasomal degradation. Interacts with NONO, WDR5 and SFPQ. Interacts with USP2. Interacts with HNF4A. Post-translationally, phosphorylated on serine residues by CSNK1D, CSNK1E and probably also by CSNK1G2. Phosphorylation by CSNK1D or CSNK1E promotes nuclear location of PER proteins as well as ubiquitination and subsequent degradation. May be dephosphorylated by PP1. Ubiquitinated; requires phosphorylation by CSNK1E and interaction with BTRC and FBXW11. Deubiquitinated by USP2. As to expression, expressed in the brain, mainly in the suprachiasmatic nucleus (SCN). Expression also found in the harderian gland, lung, eye, intestine, liver and skeletal muscle.

The protein localises to the nucleus. It is found in the cytoplasm. In terms of biological role, transcriptional repressor which forms a core component of the circadian clock. The circadian clock, an internal time-keeping system, regulates various physiological processes through the generation of approximately 24 hour circadian rhythms in gene expression, which are translated into rhythms in metabolism and behavior. It is derived from the Latin roots 'circa' (about) and 'diem' (day) and acts as an important regulator of a wide array of physiological functions including metabolism, sleep, body temperature, blood pressure, endocrine, immune, cardiovascular, and renal function. Consists of two major components: the central clock, residing in the suprachiasmatic nucleus (SCN) of the brain, and the peripheral clocks that are present in nearly every tissue and organ system. Both the central and peripheral clocks can be reset by environmental cues, also known as Zeitgebers (German for 'timegivers'). The predominant Zeitgeber for the central clock is light, which is sensed by retina and signals directly to the SCN. The central clock entrains the peripheral clocks through neuronal and hormonal signals, body temperature and feeding-related cues, aligning all clocks with the external light/dark cycle. Circadian rhythms allow an organism to achieve temporal homeostasis with its environment at the molecular level by regulating gene expression to create a peak of protein expression once every 24 hours to control when a particular physiological process is most active with respect to the solar day. Transcription and translation of core clock components (CLOCK, NPAS2, BMAL1, BMAL2, PER1, PER2, PER3, CRY1 and CRY2) plays a critical role in rhythm generation, whereas delays imposed by post-translational modifications (PTMs) are important for determining the period (tau) of the rhythms (tau refers to the period of a rhythm and is the length, in time, of one complete cycle). A diurnal rhythm is synchronized with the day/night cycle, while the ultradian and infradian rhythms have a period shorter and longer than 24 hours, respectively. Disruptions in the circadian rhythms contribute to the pathology of cardiovascular diseases, cancer, metabolic syndromes and aging. A transcription/translation feedback loop (TTFL) forms the core of the molecular circadian clock mechanism. Transcription factors, CLOCK or NPAS2 and BMAL1 or BMAL2, form the positive limb of the feedback loop, act in the form of a heterodimer and activate the transcription of core clock genes and clock-controlled genes (involved in key metabolic processes), harboring E-box elements (5'-CACGTG-3') within their promoters. The core clock genes: PER1/2/3 and CRY1/2 which are transcriptional repressors form the negative limb of the feedback loop and interact with the CLOCK|NPAS2-BMAL1|BMAL2 heterodimer inhibiting its activity and thereby negatively regulating their own expression. This heterodimer also activates nuclear receptors NR1D1/2 and RORA/B/G, which form a second feedback loop and which activate and repress BMAL1 transcription, respectively. Regulates circadian target genes expression at post-transcriptional levels, but may not be required for the repression at transcriptional level. Controls PER2 protein decay. Represses CRY2 preventing its repression on CLOCK/BMAL1 target genes such as FXYD5 and SCNN1A in kidney and PPARA in liver. Besides its involvement in the maintenance of the circadian clock, has an important function in the regulation of several processes. Participates in the repression of glucocorticoid receptor NR3C1/GR-induced transcriptional activity by reducing the association of NR3C1/GR to glucocorticoid response elements (GREs) by BMAL1:CLOCK. Plays a role in the modulation of the neuroinflammatory state via the regulation of inflammatory mediators release, such as CCL2 and IL6. In spinal astrocytes, negatively regulates the MAPK14/p38 and MAPK8/JNK MAPK cascades as well as the subsequent activation of NFkappaB. Coordinately regulates the expression of multiple genes that are involved in the regulation of renal sodium reabsorption. Can act as gene expression activator in a gene and tissue specific manner, in kidney enhances WNK1 and SLC12A3 expression in collaboration with CLOCK. Modulates hair follicle cycling. Represses the CLOCK-BMAL1 induced transcription of BHLHE40/DEC1. The chain is Period circadian protein homolog 1 (PER1) from Spalax judaei (Judean Mountains blind mole rat).